Reading from the N-terminus, the 363-residue chain is Histidinol-phosphate aminotransferase (363 aa).

The residue at position 218 (K218) is an N6-(pyridoxal phosphate)lysine.

This sequence belongs to the class-II pyridoxal-phosphate-dependent aminotransferase family. Histidinol-phosphate aminotransferase subfamily. As to quaternary structure, homodimer. Requires pyridoxal 5'-phosphate as cofactor.

It carries out the reaction L-histidinol phosphate + 2-oxoglutarate = 3-(imidazol-4-yl)-2-oxopropyl phosphate + L-glutamate. It functions in the pathway amino-acid biosynthesis; L-histidine biosynthesis; L-histidine from 5-phospho-alpha-D-ribose 1-diphosphate: step 7/9. This is Histidinol-phosphate aminotransferase from Xanthomonas euvesicatoria pv. vesicatoria (strain 85-10) (Xanthomonas campestris pv. vesicatoria).